Here is a 718-residue protein sequence, read N- to C-terminus: Methionine--tRNA ligase (718 aa).

Positions 27–37 (PYANGQIHIGH) match the 'HIGH' region motif. Zn(2+) is bound by residues Cys-158, Cys-161, Cys-171, and Cys-174. The 'KMSKS' region signature appears at 348–352 (KMSKS). Residue Lys-351 participates in ATP binding. Residues 612–718 (DFAKIDLRIA…SGAKPGMRVK (107 aa)) enclose the tRNA-binding domain.

The protein belongs to the class-I aminoacyl-tRNA synthetase family. MetG type 1 subfamily. In terms of assembly, homodimer. Zn(2+) serves as cofactor.

It localises to the cytoplasm. The enzyme catalyses tRNA(Met) + L-methionine + ATP = L-methionyl-tRNA(Met) + AMP + diphosphate. Its function is as follows. Is required not only for elongation of protein synthesis but also for the initiation of all mRNA translation through initiator tRNA(fMet) aminoacylation. This Burkholderia orbicola (strain AU 1054) protein is Methionine--tRNA ligase.